Reading from the N-terminus, the 138-residue chain is rRNA methyltransferase 1, mitochondrial (138 aa).

Residues Met-1–Ala-21 constitute a mitochondrion transit peptide. A disordered region spans residues Lys-92–Ser-113.

This sequence belongs to the class IV-like SAM-binding methyltransferase superfamily. RNA methyltransferase TrmH family.

It localises to the mitochondrion. The catalysed reaction is a guanosine in 21S rRNA + S-adenosyl-L-methionine = a 2'-O-methylguanosine in 21S rRNA + S-adenosyl-L-homocysteine + H(+). Its function is as follows. S-adenosyl-L-methionine-dependent 2'-O-ribose methyltransferase that catalyzes the formation of the 2'-O-methylguanosine corresponding to position 2270 in S.cerevisiae 21S mitochondrial large ribosomal RNA, a universally conserved modification in the peptidyl transferase domain of the 21S rRNA. This chain is rRNA methyltransferase 1, mitochondrial, found in Lachancea kluyveri (strain ATCC 58438 / CBS 3082 / BCRC 21498 / NBRC 1685 / JCM 7257 / NCYC 543 / NRRL Y-12651) (Yeast).